We begin with the raw amino-acid sequence, 223 residues long: UPF0441 protein KPK_0672 (223 aa).

The segment at Ser-165–Gly-223 is disordered. Composition is skewed to low complexity over residues Val-177–Thr-193 and Arg-209–Gly-223.

It belongs to the UPF0441 family.

This Klebsiella pneumoniae (strain 342) protein is UPF0441 protein KPK_0672.